The sequence spans 349 residues: Glycosyltransferase 8 domain-containing protein 2 (349 aa).

The Cytoplasmic portion of the chain corresponds to 1-6 (MALLRK). The helical; Signal-anchor for type II membrane protein transmembrane segment at 7 to 24 (INQVLLFLLIVTLCVILY) threads the bilayer. The Lumenal segment spans residues 25–349 (KKVHKGTVSK…AGIFKLNHHS (325 aa)). Residue Asn-234 is glycosylated (N-linked (GlcNAc...) asparagine).

This sequence belongs to the glycosyltransferase 8 family.

It is found in the membrane. This is Glycosyltransferase 8 domain-containing protein 2 (GLT8D2) from Macaca fascicularis (Crab-eating macaque).